Reading from the N-terminus, the 451-residue chain is Neuraminidase (451 aa).

The Intravirion segment spans residues 1-6; it reads MNPNQK. A helical membrane pass occupies residues 7 to 29; that stretch reads IITIGSMSLTIATVCFLMQIAIL. Residues 11 to 33 are involved in apical transport and lipid raft association; the sequence is GSMSLTIATVCFLMQIAILATNV. At 30-451 the chain is on the virion surface side; it reads ATNVTLHFRQ…DGANINFMPL (422 aa). Residues N32, N48, and N66 are each glycosylated (N-linked (GlcNAc...) asparagine; by host). A hypervariable stalk region region spans residues 36 to 68; that stretch reads HFRQNEESIPAYNQTTPCKPIIIERNIKYRNWS. The interval 71–451 is head of neuraminidase; the sequence is QCQITGFAPF…DGANINFMPL (381 aa). Intrachain disulfides connect C72–C399, C104–C109, C163–C210, C212–C217, C258–C272, C260–C270, C300–C319, and C403–C429. R98 serves as a coordination point for substrate. 2 N-linked (GlcNAc...) asparagine; by host glycosylation sites follow: N123 and N126. The Proton donor/acceptor role is filled by D131. Residue R132 participates in substrate binding. 2 N-linked (GlcNAc...) asparagine; by host glycosylation sites follow: N180 and N214. 256-257 serves as a coordination point for substrate; that stretch reads EE. R273 lines the substrate pocket. Ca(2+)-binding residues include D274, G278, and D306. The disordered stretch occupies residues 307-331; it reads TPRNDDSSSSSNCRDPNNERGNPGV. R353 is a binding site for substrate. Residue N384 is glycosylated (N-linked (GlcNAc...) asparagine; by host). The active-site Nucleophile is Y388.

This sequence belongs to the glycosyl hydrolase 34 family. Homotetramer. Requires Ca(2+) as cofactor. N-glycosylated.

It is found in the virion membrane. The protein localises to the host apical cell membrane. The enzyme catalyses Hydrolysis of alpha-(2-&gt;3)-, alpha-(2-&gt;6)-, alpha-(2-&gt;8)- glycosidic linkages of terminal sialic acid residues in oligosaccharides, glycoproteins, glycolipids, colominic acid and synthetic substrates.. Its activity is regulated as follows. Inhibited by the neuraminidase inhibitors zanamivir (Relenza) and oseltamivir (Tamiflu). These drugs interfere with the release of progeny virus from infected cells and are effective against all influenza strains. Resistance to neuraminidase inhibitors is quite rare. Functionally, catalyzes the removal of terminal sialic acid residues from viral and cellular glycoconjugates. Cleaves off the terminal sialic acids on the glycosylated HA during virus budding to facilitate virus release. Additionally helps virus spread through the circulation by further removing sialic acids from the cell surface. These cleavages prevent self-aggregation and ensure the efficient spread of the progeny virus from cell to cell. Otherwise, infection would be limited to one round of replication. Described as a receptor-destroying enzyme because it cleaves a terminal sialic acid from the cellular receptors. May facilitate viral invasion of the upper airways by cleaving the sialic acid moieties on the mucin of the airway epithelial cells. Likely to plays a role in the budding process through its association with lipid rafts during intracellular transport. May additionally display a raft-association independent effect on budding. Plays a role in the determination of host range restriction on replication and virulence. Sialidase activity in late endosome/lysosome traffic seems to enhance virus replication. In Aves, this protein is Neuraminidase.